Consider the following 536-residue polypeptide: Chaperonin GroEL (536 aa).

Residues 30–33, 86–90, glycine 414, and aspartate 494 contribute to the ATP site; these read TLGP and DGTTT.

It belongs to the chaperonin (HSP60) family. As to quaternary structure, forms a cylinder of 14 subunits composed of two heptameric rings stacked back-to-back. Interacts with the co-chaperonin GroES.

It localises to the cytoplasm. It catalyses the reaction ATP + H2O + a folded polypeptide = ADP + phosphate + an unfolded polypeptide.. Functionally, together with its co-chaperonin GroES, plays an essential role in assisting protein folding. The GroEL-GroES system forms a nano-cage that allows encapsulation of the non-native substrate proteins and provides a physical environment optimized to promote and accelerate protein folding. The chain is Chaperonin GroEL from Methanosarcina barkeri (strain Fusaro / DSM 804).